Consider the following 414-residue polypeptide: Ankyrin repeat domain-containing protein 10 (414 aa).

ANK repeat units lie at residues 18-47 (TLRF…RSDL), 54-83 (YGWT…SVNA), 88-117 (FAQT…NINK), 121-150 (VGET…QIDL), and 154-187 (SGLT…RYYS). A disordered region spans residues 310-332 (GVTSPSRHRIHTSNGTEEPEKAM).

The chain is Ankyrin repeat domain-containing protein 10 (ANKRD10) from Gallus gallus (Chicken).